Reading from the N-terminus, the 1192-residue chain is Protein WWC2 (1192 aa).

WW domains are found at residues 10–43 and 57–90; these read LPLP…DPRD and DELP…DPRK. Coiled-coil stretches lie at residues 121–194 and 224–256; these read KEQR…YKEQ and ELKS…FHLD. Phosphoserine is present on serine 286. A coiled-coil region spans residues 302–421; the sequence is LAEKVRLSLQ…KLEETTKLTT (120 aa). Positions 441–462 are disordered; that stretch reads SSLGSLASSRGSLNTSSRGSLN. The C2 domain occupies 698–821; sequence ETAQVQIGLR…FSSEVFTLWY (124 aa). Positions 859-887 form a coiled coil; that stretch reads ALLARTSAELLAVEQELAQEEEEESGQEE. Disordered stretches follow at residues 873–895 and 911–991; these read QELA…DGDW and EAEV…SRQH. Over residues 875–885 the composition is skewed to acidic residues; that stretch reads LAQEEEEESGQ. Residues 923-933 are compositionally biased toward polar residues; it reads TEDLSSCTSVP. The span at 938 to 951 shows a compositional bias: basic and acidic residues; sequence DGNRKESNCAKDLR. Threonine 1004 bears the Phosphothreonine mark. Serine 1022 carries the post-translational modification Phosphoserine. The interval 1031-1050 is interaction with PRKCZ; it reads SLFVRNSTERRSLRVKRTVC. Positions 1068-1144 form a coiled coil; sequence DLELDLQASL…EQKQGLNAEK (77 aa). Residues 1124–1137 are compositionally biased toward basic and acidic residues; the sequence is QAEKQAEQSKEEQK. Residues 1124 to 1143 are disordered; it reads QAEKQAEQSKEEQKQGLNAE.

This sequence belongs to the WWC family. Forms homodimers and heterodimers with WWC1 and WWC3. Interacts with DLC1 and PRKCZ. Interacts (via WW domains) with LATS1 and LATS2.

It localises to the cytoplasm. Its subcellular location is the cytosol. Functionally, regulator of the Hippo signaling pathway, also known as the Salvador-Warts-Hippo (SWH) pathway. Enhances phosphorylation of LATS1 and YAP1 and negatively regulates cell proliferation and organ growth due to a suppression of the transcriptional activity of YAP1, the major effector of the Hippo pathway. The polypeptide is Protein WWC2 (Homo sapiens (Human)).